The primary structure comprises 309 residues: Cell division protein FtsQ (309 aa).

Topologically, residues 1–52 (MLALRGRRGKRVRYPADGVAEADEAFVLPRPLRRGVRFLISLGAGRIRFPNH) are cytoplasmic. The helical transmembrane segment at 53–74 (TGTVAAAAFMVATGLYGMSLGG) threads the bilayer. The Periplasmic portion of the chain corresponds to 75-309 (HTQSFAQVST…KMLKAQEKRI (235 aa)). One can recognise a POTRA domain in the interval 89-157 (FAIEDVRVSG…GTIEVVLKER (69 aa)).

The protein belongs to the FtsQ/DivIB family. FtsQ subfamily.

It is found in the cell inner membrane. Essential cell division protein. The sequence is that of Cell division protein FtsQ from Rhizobium meliloti (strain 1021) (Ensifer meliloti).